Reading from the N-terminus, the 330-residue chain is Cathepsin K (330 aa).

Residues 1–16 (MWGLKVVLLLPVMSSA) form the signal peptide. Positions 17–115 (LYPEEILDTQ…TLYIPDWEGR (99 aa)) are cleaved as a propeptide — activation peptide. N104 carries an N-linked (GlcNAc...) asparagine glycan. 3 cysteine pairs are disulfide-bonded: C137/C178, C171/C211, and C270/C319. The active site involves C140. Catalysis depends on residues H277 and N297.

Belongs to the peptidase C1 family. Expressed in the thyroid epithelial cells.

The protein resides in the lysosome. It localises to the secreted. The protein localises to the apical cell membrane. It carries out the reaction Broad proteolytic activity. With small-molecule substrates and inhibitors, the major determinant of specificity is P2, which is preferably Leu, Met &gt; Phe, and not Arg.. In terms of biological role, thiol protease involved in osteoclastic bone resorption and may participate partially in the disorder of bone remodeling. Displays potent endoprotease activity against fibrinogen at acid pH. May play an important role in extracellular matrix degradation. Involved in the release of thyroid hormone thyroxine (T4) by limited proteolysis of TG/thyroglobulin in the thyroid follicle lumen. This is Cathepsin K (CTSK) from Sus scrofa (Pig).